We begin with the raw amino-acid sequence, 219 residues long: Protein YNG1 (219 aa).

A PHD-type; degenerate zinc finger spans residues 155–204; that stretch reads EVYCFCRNVSYGPMVACDNPACPFEWFHYGCVGLKQAPKGKWYCSKDCKE. 8 residues coordinate Zn(2+): Cys-158, Cys-160, Cys-171, Cys-176, His-182, Cys-185, Cys-198, and Cys-202.

It belongs to the ING family. In terms of assembly, component of the NuA3 histone acetyltransferase (HAT) complex. The NuA3 HAT complex has 2 functionally distinct forms that participate in transcription. The NuA3a HAT complex is composed of at least NTO1, SAS3, TAF14, YNG1 and EAF6. The NuA3b HAT complex contains an additional subunit, PDP3. Interacts with H3K4me3 and to a lesser extent with H3K4me2.

Its subcellular location is the nucleus. Its function is as follows. Histone-binding component of the NuA3a histone acetyltransferase complex. Targets the NuA3a HAT complex via histone H3K4me3 to facilitate transcription initiation at promoter regions. SAS3 then acetylates H3K14, leading to transcription initiation at a subset of genes. YNG1 is required for the HAT activity of NuA3 but not for its integrity. Mediates the interaction of SAS3 with nucleosomes. The polypeptide is Protein YNG1 (YNG1) (Saccharomyces cerevisiae (strain ATCC 204508 / S288c) (Baker's yeast)).